Here is a 359-residue protein sequence, read N- to C-terminus: Acetoin catabolism protein X (359 aa).

Its subcellular location is the cell membrane. The protein operates within ketone degradation; acetoin degradation. Functionally, essential for acetoin catabolism. The sequence is that of Acetoin catabolism protein X (acoX) from Cupriavidus necator (strain ATCC 17699 / DSM 428 / KCTC 22496 / NCIMB 10442 / H16 / Stanier 337) (Ralstonia eutropha).